Consider the following 34-residue polypeptide: Potassium channel toxin alpha-KTx 18.2 (34 aa).

Disulfide bonds link cysteine 7–cysteine 26, cysteine 12–cysteine 31, and cysteine 16–cysteine 33.

In terms of tissue distribution, expressed by the venom gland.

It is found in the secreted. Reversibly blocks Shaker B potassium channels. The chain is Potassium channel toxin alpha-KTx 18.2 from Tityus discrepans (Venezuelan scorpion).